A 169-amino-acid chain; its full sequence is Myelin basic protein (169 aa).

The residue at position 1 (A1) is an N-acetylalanine. The disordered stretch occupies residues 1 to 114; it reads AAQKRPSQRS…GRGLSLSRFS (114 aa). S7 is subject to Phosphoserine; in C5 and C6. At S10 the chain carries Phosphoserine. The residue at position 12 (Y12) is a Phosphotyrosine. Position 17 is a phosphoserine (S17). Phosphothreonine is present on T18. Residue R23 is modified to Citrulline; in form C8b. Position 29 is a citrulline (R29). T33 carries the phosphothreonine modification. Residue S38 is modified to Phosphoserine. Residue R41 is modified to Citrulline; alternate. R41 carries the post-translational modification Omega-N-methylarginine; alternate. Residues 43-87 are induces experimental autoimmune encephalomyelitis (EAE) 1; the sequence is FGSDRGAPKRGSGKDGHHAARTTHYGSLPQKAQGHRPQDENPVVH. At R47 the chain carries Citrulline; in form C8b. R47 is modified (omega-N-methylarginine). Residue S54 is modified to Phosphoserine; in C4, C5 and C6. The residue at position 63 (R63) is a Citrulline. T65 carries the phosphothreonine modification. Residue Y67 is modified to Phosphotyrosine. T94 carries the post-translational modification Phosphothreonine. R96 bears the Citrulline; in form C2, C3, C8a and C8b mark. A Phosphothreonine; by MAPK; in C3, C4, C5 and C6 modification is found at T97. At Q102 the chain carries Deamidated glutamine; in form C5. At R106 the chain carries Citrulline; alternate. Position 106 is an omega-N-methylarginine; alternate (R106). R106 is modified (symmetric dimethylarginine; alternate). R112 carries the post-translational modification Citrulline. Position 114 is a phosphoserine (S114). Residues 114–122 form an induces experimental autoimmune encephalomyelitis (EAE) 2 region; it reads SWGAEGQKP. Residue Q120 is modified to Deamidated glutamine; in form C3. K121 carries the post-translational modification N6-acetyllysine. R129 carries the post-translational modification Citrulline. The disordered stretch occupies residues 133-169; the sequence is YKSAHKGLKGHDAQGTLSKIFKLGGRDSRSGSPMARR. Residue Q146 is modified to Deamidated glutamine; in form C2. A Citrulline modification is found at R158. S160 carries the phosphoserine; in C4 and C6 modification. R161 bears the Citrulline; in form C3 mark. S164 carries the phosphoserine; in form C3, C5 and C6 modification. R168 and R169 each carry citrulline.

This sequence belongs to the myelin basic protein family. Homodimer; self-associates in the presence of lysolipid. At least 6 charge isomers; C1 (the most cationic and least modified form), C2, C3, C4, C5 and C6 (the least cationic form); are produced as a result of optional post-translational modifications, such as phosphorylation of serine or threonine residues, deamidation of glutamine or asparagine residues, citrullination and methylation of arginine residues. Post-translationally, phosphorylated by TAOK2, VRK2, MAPK11, MAPK12, MAPK14 and MINK1. In terms of processing, proteolytically cleaved in B cell lysosomes by cathepsin CTSG which degrades the major immunogenic MBP epitope and prevents the activation of MBP-specific autoreactive T cells. Found in both the central and the peripheral nervous system.

The protein localises to the myelin membrane. In terms of biological role, is, with PLP, the most abundant protein component of the myelin membrane in the CNS. Has a role in both the formation and stabilization of this compact multilayer arrangement of bilayers. Each splice variant and charge isomer may have a specialized function in the assembly of an optimized, biochemically functional myelin membrane. The sequence is that of Myelin basic protein (MBP) from Bos taurus (Bovine).